We begin with the raw amino-acid sequence, 304 residues long: Homoserine dehydrogenase (304 aa).

Positions 8, 10, 11, 38, 39, and 73 each coordinate NADP(+). Tyr-8 contacts NADPH. NADPH-binding residues include Val-11 and Arg-38. Val-11 serves as a coordination point for NAD(+). Ser-73, Ser-74, Thr-100, and Lys-102 together coordinate NADPH. Ser-73 is a binding site for NAD(+). NADP(+) is bound by residues Thr-100 and Lys-102. 2 residues coordinate Na(+): Val-129 and Thr-133. Residues Gly-182 and Glu-185 each contribute to the NADP(+) site. L-homoserine is bound by residues Glu-185 and Asp-196. Catalysis depends on Lys-200, which acts as the Proton donor. Gly-284 contributes to the NADP(+) binding site. Gly-284 serves as a coordination point for NADPH. Gly-284 provides a ligand contact to NAD(+).

The protein belongs to the homoserine dehydrogenase family. As to quaternary structure, homodimer. Requires a metal cation as cofactor. The enzyme is activated by reductive cleavage of the interchain disulfide bond between the two subunits.

The catalysed reaction is L-homoserine + NADP(+) = L-aspartate 4-semialdehyde + NADPH + H(+). The enzyme catalyses L-homoserine + NAD(+) = L-aspartate 4-semialdehyde + NADH + H(+). It participates in amino-acid biosynthesis; L-methionine biosynthesis via de novo pathway; L-homoserine from L-aspartate: step 3/3. The protein operates within amino-acid biosynthesis; L-threonine biosynthesis; L-threonine from L-aspartate: step 3/5. Inhibited by cysteine. Functionally, catalyzes the conversion of L-aspartate-beta-semialdehyde (L-Asa) to L-homoserine (L-Hse), the third step in the biosynthesis of threonine and methionine from aspartate. The polypeptide is Homoserine dehydrogenase (Sulfurisphaera tokodaii (strain DSM 16993 / JCM 10545 / NBRC 100140 / 7) (Sulfolobus tokodaii)).